The sequence spans 393 residues: G protein-activated inward rectifier potassium channel 3 (393 aa).

The interval 1-23 (MAQENAAFSPGQEEPPRRRGRQR) is disordered. The Cytoplasmic segment spans residues 1–57 (MAQENAAFSPGQEEPPRRRGRQRYVEKDGRCNVQQGNVRETYRYLTDLFTTLVDLQW). The chain crosses the membrane as a helical span at residues 58 to 82 (RLSLLFFVLAYALTWLFFGAIWWLI). The Extracellular segment spans residues 83–106 (AYGRGDLEHLEDTAWTPCVNNLNG). An intramembrane region (helical; Pore-forming) is located at residues 107-118 (FVAAFLFSIETE). Positions 119 to 125 (TTIGYGH) form an intramembrane region, pore-forming. The Selectivity filter motif lies at 120 to 125 (TIGYGH). Topologically, residues 126–134 (RVITDQCPE) are extracellular. The helical transmembrane segment at 135-156 (GIVLLLLQAILGSMVNAFMVGC) threads the bilayer. Over 157-393 (MFVKISQPNK…LPPPESESKV (237 aa)) the chain is Cytoplasmic. The tract at residues 360–393 (KVEEEGAGEGAGGEAGADKEQNGCLPPPESESKV) is disordered. The span at 384-393 (LPPPESESKV) shows a compositional bias: pro residues. The short motif at 390 to 393 (ESKV) is the PDZ-binding element.

This sequence belongs to the inward rectifier-type potassium channel (TC 1.A.2.1) family. KCNJ9 subfamily. In terms of assembly, associates with KCNJ3/GIRK1 to form a G-protein-activated heteromultimer pore-forming unit. Interacts (via PDZ-binding motif) with SNX27 (via PDZ domain); the interaction is required when endocytosed to prevent degradation in lysosomes and promote recycling to the plasma membrane.

It is found in the membrane. It carries out the reaction K(+)(in) = K(+)(out). Functionally, inward rectifier potassium channels are characterized by a greater tendency to allow potassium to flow into the cell rather than out of it. Their voltage dependence is regulated by the concentration of extracellular potassium; as external potassium is raised, the voltage range of the channel opening shifts to more positive voltages. The inward rectification is mainly due to the blockage of outward current by internal magnesium, This receptor is controlled by G proteins. Unable to produce channel activity when expressed alone. Forms a functional channel in association with KCNJ3/GIRK1. This chain is G protein-activated inward rectifier potassium channel 3 (KCNJ9), found in Homo sapiens (Human).